The chain runs to 116 residues: Ribosome-binding factor A (116 aa).

The protein belongs to the RbfA family. As to quaternary structure, monomer. Binds 30S ribosomal subunits, but not 50S ribosomal subunits or 70S ribosomes.

Its subcellular location is the cytoplasm. Its function is as follows. One of several proteins that assist in the late maturation steps of the functional core of the 30S ribosomal subunit. Associates with free 30S ribosomal subunits (but not with 30S subunits that are part of 70S ribosomes or polysomes). Required for efficient processing of 16S rRNA. May interact with the 5'-terminal helix region of 16S rRNA. This chain is Ribosome-binding factor A, found in Streptococcus pneumoniae serotype 4 (strain ATCC BAA-334 / TIGR4).